A 572-amino-acid chain; its full sequence is Phosphoenolpyruvate-protein phosphotransferase (572 aa).

The Tele-phosphohistidine intermediate role is filled by His-191. 2 residues coordinate phosphoenolpyruvate: Arg-298 and Arg-334. Positions 433 and 457 each coordinate Mg(2+). Phosphoenolpyruvate contacts are provided by residues 456–457 (ND) and Arg-467. Cys-504 acts as the Proton donor in catalysis.

Belongs to the PEP-utilizing enzyme family. In terms of assembly, homodimer. It depends on Mg(2+) as a cofactor.

The protein resides in the cytoplasm. It catalyses the reaction L-histidyl-[protein] + phosphoenolpyruvate = N(pros)-phospho-L-histidyl-[protein] + pyruvate. In terms of biological role, general (non sugar-specific) component of the phosphoenolpyruvate-dependent sugar phosphotransferase system (sugar PTS). This major carbohydrate active-transport system catalyzes the phosphorylation of incoming sugar substrates concomitantly with their translocation across the cell membrane. Enzyme I transfers the phosphoryl group from phosphoenolpyruvate (PEP) to the phosphoryl carrier protein (HPr). The protein is Phosphoenolpyruvate-protein phosphotransferase (ptsI) of Staphylococcus aureus (strain MRSA252).